The primary structure comprises 226 residues: Probable septum site-determining protein MinC (226 aa).

This sequence belongs to the MinC family. Interacts with MinD and FtsZ.

Cell division inhibitor that blocks the formation of polar Z ring septums. Rapidly oscillates between the poles of the cell to destabilize FtsZ filaments that have formed before they mature into polar Z rings. Prevents FtsZ polymerization. The polypeptide is Probable septum site-determining protein MinC (Edwardsiella ictaluri (strain 93-146)).